Reading from the N-terminus, the 587-residue chain is Folylpolyglutamate synthase, mitochondrial (587 aa).

A mitochondrion-targeting transit peptide spans 1 to 42; it reads MSWARSRLCSTLSLAAVSARGATTEGAARRGMSAWPAPQEPG. 106–109 contributes to the ATP binding site; sequence GKGS. Ser-130, Glu-200, and His-228 together coordinate Mg(2+). ATP-binding residues include Arg-363 and Asp-377. A Phosphoserine modification is found at Ser-539.

The protein belongs to the folylpolyglutamate synthase family. As to quaternary structure, monomer. Requires a monovalent cation as cofactor. In terms of tissue distribution, with non-specific probe, highest content in kidney and liver and lowest in spleen, lung and small intestine, and readily detectable in all of the tumors except hepatoma. Isoform 1 and isoform 2 expressed in leukemic cells and isoform 4 and isoform 5 in liver cells. Isoform 1 and isoform 2 exclusively expressed in hepatoma and Lewis lung carcinoma. Isoform 1 and isoform 2 also expressed in bone marrow, small intestine and spleen. Kidney expresses isoform 1, isoform 2, isoform 4 and isoform 5.

The protein resides in the mitochondrion inner membrane. It localises to the mitochondrion matrix. Its subcellular location is the cytoplasm. It catalyses the reaction (6S)-5,6,7,8-tetrahydrofolyl-(gamma-L-Glu)(n) + L-glutamate + ATP = (6S)-5,6,7,8-tetrahydrofolyl-(gamma-L-Glu)(n+1) + ADP + phosphate + H(+). It participates in cofactor biosynthesis; tetrahydrofolylpolyglutamate biosynthesis. With respect to regulation, inhibited by ammonium sulfate. Inhibited by pentaglutamate derivative of DDATHF, but isoform 2 is inhibited to a greater extent at lower concentrations of the compound that is isoform 5. Isoform 5 is virtually unaffected by H(4)PteGlu(5) and 5,10-CH(2)-H(4)PteGlu(5) at concentrations that substantially inhibits the activity of isoform 2. Isoform 2 and 5 are equally sensitive to polyglutamates of 10-CHO-H(4)-PteGlu. Its function is as follows. Catalyzes conversion of folates to polyglutamate derivatives allowing concentration of folate compounds in the cell and the intracellular retention of these cofactors, which are important substrates for most of the folate-dependent enzymes that are involved in one-carbon transfer reactions involved in purine, pyrimidine and amino acid synthesis. Dihydrofolate, tetrahydrofolate, 5,10-methylenetetrahydrofolate, 10-formyltetrahydrofolate and 5-formyltetrahydrofolate are the best substrates. Folic acid and 5-methyltetrahydrofolate can also act as substrates. The chain is Folylpolyglutamate synthase, mitochondrial (Fpgs) from Mus musculus (Mouse).